Reading from the N-terminus, the 982-residue chain is Glutamate [NMDA] receptor subunit 1 (982 aa).

The signal sequence occupies residues 1–16 (MAFAVWFLSTFVIVAA). The Extracellular segment spans residues 17–561 (QRHMALEHEG…TLVSFLQPFS (545 aa)). N247, N303, N334, N386, N443, N470, and N490 each carry an N-linked (GlcNAc...) asparagine glycan. Glycine is bound by residues 518 to 520 (PLT) and R525. The chain crosses the membrane as a helical span at residues 562–582 (NTLWILVMVSVHVVALVLYLL). Residues 583–639 (DRFSPFGRFKLSHSDSNEEKALNLSSAVWFAWGVLLNSGIGEGTPRSFSARVLGMVW) lie on the Cytoplasmic side of the membrane. A helical membrane pass occupies residues 640–660 (AGFAMIIVASYTANLAAFLVL). At 661–819 (ERPKTKLSGI…KTPNTLGLKN (159 aa)) the chain is on the extracellular side. A glycan (N-linked (GlcNAc...) asparagine) is linked at N681. Residues S691 and D735 each coordinate glycine. The helical transmembrane segment at 820–840 (MAGVFILVGVGIAGGVGLIII) threads the bilayer. Residues 841 to 982 (EVIYKKHQVK…YTSDVSHLVV (142 aa)) are Cytoplasmic-facing. The tract at residues 934–982 (EIGKPGQSPKVIGGPPHPMLGKTRPQAQQNLLPPRYSPGYTSDVSHLVV) is disordered. Residues 972–982 (GYTSDVSHLVV) show a composition bias toward polar residues.

It belongs to the glutamate-gated ion channel (TC 1.A.10.1) family. Forms a heteromeric NMDA channel with Nmdar2.

The protein localises to the cell membrane. It is found in the postsynaptic cell membrane. It localises to the postsynaptic density. Its function is as follows. NMDA receptor subtype of glutamate-gated ion channels with high calcium permeability and voltage-dependent sensitivity to magnesium. Mediated by glycine. This protein plays a key role in synaptic plasticity, synaptogenesis, excitotoxicity, memory acquisition and learning. It mediates neuronal functions in glutamate neurotransmission. Is involved in the cell surface targeting of NMDA receptors. Plays a role in associative learning and in long-term memory consolidation. The sequence is that of Glutamate [NMDA] receptor subunit 1 from Drosophila willistoni (Fruit fly).